Consider the following 280-residue polypeptide: Thioredoxin-related transmembrane protein 1 (280 aa).

A signal peptide spans 1–26 (MAPSGSLAVPLAVLVLLLWGAPWTHG). Residues 27–132 (RRSNVRVITD…FINFISDKEW (106 aa)) form the Thioredoxin domain. Residues 27-180 (RRSNVRVITD…EDLGLPVWGS (154 aa)) lie on the Extracellular side of the membrane. Residues Cys-56 and Cys-59 each act as nucleophile in the active site. An intrachain disulfide couples Cys-56 to Cys-59. A helical membrane pass occupies residues 181-203 (YTVFALATLFSGLLLGLCMIFVA). The Cytoplasmic segment spans residues 204–280 (DCLCPSKRRR…LGPSLATDKS (77 aa)). Residues Cys-205 and Cys-207 are each lipidated (S-palmitoyl cysteine). A disordered region spans residues 218 to 280 (PYPSKKLLSE…LGPSLATDKS (63 aa)). Phosphoserine occurs at positions 228, 247, 270, 274, and 280. Residues 237 to 252 (EEQEADEEDVSEEEAE) show a composition bias toward acidic residues.

In terms of assembly, interacts with ATP2A2. In terms of processing, palmitoylated; palmitoylation is required for localization to mitochondria-associated endoplasmic reticulum membrane (MAM). As to expression, ubiquitous. Highly expressed in kidney, liver, placenta and lung.

Its subcellular location is the endoplasmic reticulum membrane. It localises to the mitochondrion membrane. The protein localises to the secreted. It carries out the reaction Catalyzes the rearrangement of -S-S- bonds in proteins.. Thiredoxin domain-containing protein that participates in various redox reactions through the reversible oxidation of its active center dithiol to a disulfide and catalyze dithiol-disulfide exchange reactions. Acts as a key inhibitor of the alternative triglyceride biosynthesis pathway by inhibiting the activity of TMEM68/DIESL at the endoplasmic reticulum, thereby restricting accumulation of triacylglycerol. The alternative triglyceride biosynthesis pathway mediates formation of triacylglycerol from diacylglycerol and membrane phospholipids. Acts as a protein disulfide isomerase by catalyzing formation or reduction of disulfide bonds. Specifically mediates formation of disulfide bonds of transmembrane proteins at the endoplasmic reticulum membrane. Involved in endoplasmic reticulum-associated degradation (ERAD) via its protein disulfide isomerase activity by acting on folding-defective polypeptides at the endoplasmic reticulum membrane. Acts as a negative regulator of platelet aggregation following secretion in the extracellular space. Acts as a regulator of endoplasmic reticulum-mitochondria contact sites via its ability to regulate redox signals. Regulates endoplasmic reticulum-mitochondria Ca(2+) flux. The sequence is that of Thioredoxin-related transmembrane protein 1 from Homo sapiens (Human).